A 412-amino-acid chain; its full sequence is Allantoate amidohydrolase (412 aa).

Zn(2+) is bound by residues His84, Asp95, Glu130, and His193. Positions 218, 278, and 291 each coordinate allantoate. His385 provides a ligand contact to Zn(2+).

Belongs to the peptidase M20 family. As to quaternary structure, homodimer. Zn(2+) serves as cofactor.

The protein localises to the cytoplasm. The enzyme catalyses allantoate + H2O + 2 H(+) = (S)-2-ureidoglycine + NH4(+) + CO2. The protein operates within nitrogen metabolism; (S)-allantoin degradation. Functionally, involved in the anaerobic nitrogen utilization via the assimilation of allantoin. Catalyzes specifically the hydrolysis of allantoate to yield CO2, NH3 and S-ureidoglycine, which is unstable and readily undergoes a second deamination by S-ureidoglycine aminohydrolase AllE to yield S-ureidoglycolate and NH3. The chain is Allantoate amidohydrolase from Bacillus subtilis (strain 168).